The primary structure comprises 747 residues: MTESWEQGKGRRTQPPWSAPNTNEQPGLRLYNSLTRSKELFFPQVGRKVTWYCCGPTVYDASHMGHARSYISFDILRRVLRDYFKYDVFYCMNITDIDDKIIKRARQRHLFQQYRESNPPHSDLLQDVNTALIPFLQRISETNDPDKKQMLERIQTAVSAALLPLQDALNKNTGAEELQKHSQVLMEAAVDLLSDWLDEKHGAQIADNSIFSQLPKYWEGEYHKDMEALNVLTPDVLTRVSEYVPEIVAFVQKIVDNGYGYVSNGSVYFSTAKFHDSENHFYAKLVPEAVGDQKALQEGEGDLSISADRLSEKQSPNDFALWKASKPGEPSWESPWGKGRPGWHIECSAMAGSILGESMDIHGGGFDLRFPHHDNELAQSEAYFDNDHWVRYFLHTGHLTIAGCKMSKSLKNFITIKDALQKNTARQLRLAFLMHSWKDTLDYSNNTMESAVQYEKFMNEFFLNVKDLLRAPTDITGQFVKWEVLEIELNNCFYSKKAAIHEALCDNIDTRTVMEEMRSLVSQCNSYIASKKVAKQFPNRMLLRSISSYLTSMLKVFGAIEGEEVIGFPIGGSENSMNLESTVMPYLQVLSQFREGVRQIARQHKVTEVLQLSDLLRDDILPELGVRLEDHEGLPTVVKLVDRETLLKEKEEKRKAEEEKQRKKEEAARKKQQQEAAKLEKMKISPSQMFTLETDKYSQFDESGFPTHDTEGKELSKGQTKKLRKLFEVQEKLHKEYLQMVQNGTTA.

A disordered region spans residues 1–26 (MTESWEQGKGRRTQPPWSAPNTNEQP). The span at 15–25 (PPWSAPNTNEQ) shows a compositional bias: polar residues. Cys-54 serves as a coordination point for Zn(2+). Gly-55 provides a ligand contact to L-cysteine. The short motif at 56–66 (PTVYDASHMGH) is the 'HIGH' region element. Thr-95 is an L-cysteine binding site. The 'KIIK' region motif lies at 100 to 103 (KIIK). Positions 347, 372, and 376 each coordinate Zn(2+). His-372 contributes to the L-cysteine binding site. Residues 405–409 (KMSKS) carry the 'KMSKS' region motif. ATP is bound at residue Lys-408. Positions 651–683 (EEKRKAEEEKQRKKEEAARKKQQQEAAKLEKMK) are enriched in basic and acidic residues. 2 disordered regions span residues 651-685 (EEKR…MKIS) and 700-721 (FDES…GQTK).

It belongs to the class-I aminoacyl-tRNA synthetase family. Homodimer. Requires Zn(2+) as cofactor.

The protein resides in the cytoplasm. It catalyses the reaction tRNA(Cys) + L-cysteine + ATP = L-cysteinyl-tRNA(Cys) + AMP + diphosphate. Its function is as follows. Catalyzes the ATP-dependent ligation of cysteine to tRNA(Cys). The chain is Cysteine--tRNA ligase, cytoplasmic (cars1) from Xenopus laevis (African clawed frog).